Consider the following 269-residue polypeptide: UPF0162 protein BU173 (269 aa).

The protein belongs to the UPF0162 family.

In Buchnera aphidicola subsp. Acyrthosiphon pisum (strain APS) (Acyrthosiphon pisum symbiotic bacterium), this protein is UPF0162 protein BU173.